A 258-amino-acid chain; its full sequence is Imidazole glycerol phosphate synthase subunit HisF (258 aa).

Residues Asp-11 and Asp-130 contribute to the active site.

The protein belongs to the HisA/HisF family. Heterodimer of HisH and HisF.

The protein resides in the cytoplasm. It catalyses the reaction 5-[(5-phospho-1-deoxy-D-ribulos-1-ylimino)methylamino]-1-(5-phospho-beta-D-ribosyl)imidazole-4-carboxamide + L-glutamine = D-erythro-1-(imidazol-4-yl)glycerol 3-phosphate + 5-amino-1-(5-phospho-beta-D-ribosyl)imidazole-4-carboxamide + L-glutamate + H(+). The protein operates within amino-acid biosynthesis; L-histidine biosynthesis; L-histidine from 5-phospho-alpha-D-ribose 1-diphosphate: step 5/9. In terms of biological role, IGPS catalyzes the conversion of PRFAR and glutamine to IGP, AICAR and glutamate. The HisF subunit catalyzes the cyclization activity that produces IGP and AICAR from PRFAR using the ammonia provided by the HisH subunit. In Blochmanniella floridana, this protein is Imidazole glycerol phosphate synthase subunit HisF.